The sequence spans 280 residues: Urease accessory protein UreD 1 (280 aa).

It belongs to the UreD family. As to quaternary structure, ureD, UreF and UreG form a complex that acts as a GTP-hydrolysis-dependent molecular chaperone, activating the urease apoprotein by helping to assemble the nickel containing metallocenter of UreC. The UreE protein probably delivers the nickel.

It localises to the cytoplasm. Required for maturation of urease via the functional incorporation of the urease nickel metallocenter. The chain is Urease accessory protein UreD 1 from Bradyrhizobium sp. (strain BTAi1 / ATCC BAA-1182).